We begin with the raw amino-acid sequence, 554 residues long: Hydroxylamine reductase (554 aa).

Residues Cys3, Cys6, Cys18, and Cys25 each contribute to the [2Fe-2S] cluster site. Hybrid [4Fe-2O-2S] cluster-binding residues include His252, Glu276, Cys320, Cys408, Cys436, Cys461, Glu495, and Lys497. A Cysteine persulfide modification is found at Cys408.

This sequence belongs to the HCP family. Requires [2Fe-2S] cluster as cofactor. It depends on hybrid [4Fe-2O-2S] cluster as a cofactor.

The protein resides in the cytoplasm. The catalysed reaction is A + NH4(+) + H2O = hydroxylamine + AH2 + H(+). Functionally, catalyzes the reduction of hydroxylamine to form NH(3) and H(2)O. The sequence is that of Hydroxylamine reductase from Shewanella putrefaciens (strain CN-32 / ATCC BAA-453).